The following is a 686-amino-acid chain: Translation initiation factor IF-2 (686 aa).

A disordered region spans residues 53–105; sequence EKPSVADEFEVEEKVVRSKKNSNKKKKKGKGNEDKRQENFAGRQQTQTVETPD. Basic residues predominate over residues 69–81; the sequence is RSKKNSNKKKKKG. Residues 188 to 357 enclose the tr-type G domain; the sequence is ERPAVVTIMG…LLVSEVEEYK (170 aa). Residues 197–204 are G1; that stretch reads GHVDHGKT. Residue 197–204 coordinates GTP; sequence GHVDHGKT. The segment at 222–226 is G2; that stretch reads GITQH. Positions 243–246 are G3; that stretch reads DTPG. Residues 243–247 and 297–300 contribute to the GTP site; these read DTPGH and NKMD. Positions 297-300 are G4; sequence NKMD. Residues 333-335 form a G5 region; it reads SAI.

The protein belongs to the TRAFAC class translation factor GTPase superfamily. Classic translation factor GTPase family. IF-2 subfamily.

The protein localises to the cytoplasm. One of the essential components for the initiation of protein synthesis. Protects formylmethionyl-tRNA from spontaneous hydrolysis and promotes its binding to the 30S ribosomal subunits. Also involved in the hydrolysis of GTP during the formation of the 70S ribosomal complex. The polypeptide is Translation initiation factor IF-2 (Bacillus cereus (strain ATCC 10987 / NRS 248)).